The sequence spans 133 residues: ATP synthase epsilon chain (133 aa).

This sequence belongs to the ATPase epsilon chain family. F-type ATPases have 2 components, CF(1) - the catalytic core - and CF(0) - the membrane proton channel. CF(1) has five subunits: alpha(3), beta(3), gamma(1), delta(1), epsilon(1). CF(0) has three main subunits: a, b and c.

The protein resides in the cell inner membrane. Its function is as follows. Produces ATP from ADP in the presence of a proton gradient across the membrane. This is ATP synthase epsilon chain from Desulfosudis oleivorans (strain DSM 6200 / JCM 39069 / Hxd3) (Desulfococcus oleovorans).